Consider the following 157-residue polypeptide: Ribosomal RNA large subunit methyltransferase H (157 aa).

S-adenosyl-L-methionine-binding positions include Leu-73, Gly-105, and 124 to 129 (MSKMTF).

Belongs to the RNA methyltransferase RlmH family. In terms of assembly, homodimer.

It is found in the cytoplasm. The catalysed reaction is pseudouridine(1915) in 23S rRNA + S-adenosyl-L-methionine = N(3)-methylpseudouridine(1915) in 23S rRNA + S-adenosyl-L-homocysteine + H(+). Functionally, specifically methylates the pseudouridine at position 1915 (m3Psi1915) in 23S rRNA. The polypeptide is Ribosomal RNA large subunit methyltransferase H (Bacteroides thetaiotaomicron (strain ATCC 29148 / DSM 2079 / JCM 5827 / CCUG 10774 / NCTC 10582 / VPI-5482 / E50)).